The chain runs to 262 residues: Glutamate racemase (262 aa).

Substrate-binding positions include 5-6 (DS) and 37-38 (YG). The active-site Proton donor/acceptor is Cys-69. Residue 70 to 71 (NT) participates in substrate binding. The active-site Proton donor/acceptor is the Cys-181. 182–183 (TH) lines the substrate pocket.

Belongs to the aspartate/glutamate racemases family.

It carries out the reaction L-glutamate = D-glutamate. It participates in cell wall biogenesis; peptidoglycan biosynthesis. In terms of biological role, provides the (R)-glutamate required for cell wall biosynthesis. The chain is Glutamate racemase from Buchnera aphidicola subsp. Acyrthosiphon pisum (strain Tuc7).